The sequence spans 268 residues: Phosphatidylglycerol--prolipoprotein diacylglyceryl transferase (268 aa).

Transmembrane regions (helical) follow at residues 14–34 (LGPI…FAGW), 57–77 (LTFY…IIFY), 90–110 (FFLW…LIAF), and 117–137 (IGAN…IGLG). Arg-140 is an a 1,2-diacyl-sn-glycero-3-phospho-(1'-sn-glycerol) binding site. The next 3 helical transmembrane spans lie at 174-194 (QLFE…LVTI), 200-220 (YLVL…CEFF), and 240-260 (ILSI…FIKI).

This sequence belongs to the Lgt family.

It localises to the cell inner membrane. It catalyses the reaction L-cysteinyl-[prolipoprotein] + a 1,2-diacyl-sn-glycero-3-phospho-(1'-sn-glycerol) = an S-1,2-diacyl-sn-glyceryl-L-cysteinyl-[prolipoprotein] + sn-glycerol 1-phosphate + H(+). Its pathway is protein modification; lipoprotein biosynthesis (diacylglyceryl transfer). Catalyzes the transfer of the diacylglyceryl group from phosphatidylglycerol to the sulfhydryl group of the N-terminal cysteine of a prolipoprotein, the first step in the formation of mature lipoproteins. The polypeptide is Phosphatidylglycerol--prolipoprotein diacylglyceryl transferase (Francisella tularensis subsp. tularensis (strain FSC 198)).